Here is a 430-residue protein sequence, read N- to C-terminus: Tol-Pal system protein TolB (430 aa).

The signal sequence occupies residues 1–26 (MSLMTKLGLRALVASCLIAAGGAAHA).

Belongs to the TolB family. As to quaternary structure, the Tol-Pal system is composed of five core proteins: the inner membrane proteins TolA, TolQ and TolR, the periplasmic protein TolB and the outer membrane protein Pal. They form a network linking the inner and outer membranes and the peptidoglycan layer.

It is found in the periplasm. Functionally, part of the Tol-Pal system, which plays a role in outer membrane invagination during cell division and is important for maintaining outer membrane integrity. This chain is Tol-Pal system protein TolB, found in Paraburkholderia phymatum (strain DSM 17167 / CIP 108236 / LMG 21445 / STM815) (Burkholderia phymatum).